Consider the following 182-residue polypeptide: MSTKDLEASMRKSLEATQRNFNTIRTGRANSSLLDRISVEYYGADTPLKSLATLSTPDSQTIQIQPFDISGLAAIEKAIAMSELGFTPNNDGKVIRINVPPLTEERRKEFCKMASKYAEEGKVALRNLRRDAIDKVKKQEKDGDFSEDQSRDEQDSVQKVLDKFIVELEKQLADKEAAILKV.

A disordered region spans residues 136-156 (VKKQEKDGDFSEDQSRDEQDS).

This sequence belongs to the RRF family.

The protein localises to the cytoplasm. Functionally, responsible for the release of ribosomes from messenger RNA at the termination of protein biosynthesis. May increase the efficiency of translation by recycling ribosomes from one round of translation to another. The chain is Ribosome-recycling factor from Synechococcus sp. (strain CC9902).